Reading from the N-terminus, the 433-residue chain is Homoserine O-acetyltransferase (433 aa).

The AB hydrolase-1 domain maps to 41-385; sequence NVVLVCHALT…HGHDAFLVEP (345 aa). The interval 55–74 is disordered; sequence VARSPAPERNEGTRGAGQAG. The active-site Nucleophile is the Ser-166. Arg-237 provides a ligand contact to substrate. Active-site residues include Asp-345 and His-378. Asp-379 provides a ligand contact to substrate. A disordered region spans residues 403 to 433; it reads RAVSDDGGGGGNDSARPERDHAPVHASLFKG.

The protein belongs to the AB hydrolase superfamily. MetX family. Homodimer.

It localises to the cytoplasm. It catalyses the reaction L-homoserine + acetyl-CoA = O-acetyl-L-homoserine + CoA. It functions in the pathway amino-acid biosynthesis; L-methionine biosynthesis via de novo pathway; O-acetyl-L-homoserine from L-homoserine: step 1/1. In terms of biological role, transfers an acetyl group from acetyl-CoA to L-homoserine, forming acetyl-L-homoserine. This is Homoserine O-acetyltransferase from Halorubrum lacusprofundi (strain ATCC 49239 / DSM 5036 / JCM 8891 / ACAM 34).